A 125-amino-acid polypeptide reads, in one-letter code: Cardioactive peptide (125 aa).

Residues M1 to A22 form the signal peptide. Residues A23–K42 constitute a propeptide that is removed on maturation. Residues C47 and C53 are joined by a disulfide bond. A Cysteine amide modification is found at C53. The propeptide occupies R57 to Q125.

Abdominal perivisceral organ; major neurohemal release site. Expressed in 116 neurons in post-embryonic central nervous system. Nine pairs of cells are observed in the brain, 4.5 pairs in the subesophageal ganglion, three pairs in each thoracic ganglion (T1-T3), three pairs in the first abdominal ganglion (A1), five pairs each in the second to sixth abdominal ganglia (A2-A6) and 7.5 pairs in the terminal ganglion. Expressed in every ganglion in each post-embryonic stage, except in the thoracic ganglia of first- and second-instar larvae. Colocalizes with CAP2b in median neurosecretory cells during the last larval instar through to adults.

It is found in the secreted. Cardioregulatory neurohormone that increases heart beat rate during adult wing inflation; has no effect on beat amplitude. The effect of CCAP is both ino- and chronotropic. The polypeptide is Cardioactive peptide (Manduca sexta (Tobacco hawkmoth)).